The primary structure comprises 389 residues: Lipid-A-disaccharide synthase (389 aa).

It belongs to the LpxB family.

It carries out the reaction a lipid X + a UDP-2-N,3-O-bis[(3R)-3-hydroxyacyl]-alpha-D-glucosamine = a lipid A disaccharide + UDP + H(+). Its pathway is bacterial outer membrane biogenesis; LPS lipid A biosynthesis. In terms of biological role, condensation of UDP-2,3-diacylglucosamine and 2,3-diacylglucosamine-1-phosphate to form lipid A disaccharide, a precursor of lipid A, a phosphorylated glycolipid that anchors the lipopolysaccharide to the outer membrane of the cell. This Paraburkholderia xenovorans (strain LB400) protein is Lipid-A-disaccharide synthase.